Here is a 218-residue protein sequence, read N- to C-terminus: Probable transaldolase (218 aa).

K87 (schiff-base intermediate with substrate) is an active-site residue.

Belongs to the transaldolase family. Type 3B subfamily.

It localises to the cytoplasm. It catalyses the reaction D-sedoheptulose 7-phosphate + D-glyceraldehyde 3-phosphate = D-erythrose 4-phosphate + beta-D-fructose 6-phosphate. Its pathway is carbohydrate degradation; pentose phosphate pathway; D-glyceraldehyde 3-phosphate and beta-D-fructose 6-phosphate from D-ribose 5-phosphate and D-xylulose 5-phosphate (non-oxidative stage): step 2/3. In terms of biological role, transaldolase is important for the balance of metabolites in the pentose-phosphate pathway. In Bacteroides fragilis (strain YCH46), this protein is Probable transaldolase.